The chain runs to 102 residues: uncharacterized protein (102 aa).

This is an uncharacterized protein from Methanothermococcus thermolithotrophicus (Methanococcus thermolithotrophicus).